The sequence spans 265 residues: Hydroxyethylthiazole kinase (265 aa).

Substrate is bound at residue M50. ATP-binding residues include R125 and T171. G198 provides a ligand contact to substrate.

The protein belongs to the Thz kinase family. The cofactor is Mg(2+).

It catalyses the reaction 5-(2-hydroxyethyl)-4-methylthiazole + ATP = 4-methyl-5-(2-phosphooxyethyl)-thiazole + ADP + H(+). The protein operates within cofactor biosynthesis; thiamine diphosphate biosynthesis; 4-methyl-5-(2-phosphoethyl)-thiazole from 5-(2-hydroxyethyl)-4-methylthiazole: step 1/1. Catalyzes the phosphorylation of the hydroxyl group of 4-methyl-5-beta-hydroxyethylthiazole (THZ). This Cronobacter sakazakii (strain ATCC BAA-894) (Enterobacter sakazakii) protein is Hydroxyethylthiazole kinase.